The chain runs to 378 residues: Stimulator of interferon genes protein (378 aa).

Topologically, residues 1 to 17 are cytoplasmic; the sequence is MPYSNLHPAIPRPRGHR. The tract at residues 1-189 is mediates interaction with ZDHHC1 and ZDHHC11; that stretch reads MPYSNLHPAI…MFNQLHNNML (189 aa). A helical membrane pass occupies residues 18–34; the sequence is SKYVALIFLVASLMILW. Lys19 is covalently cross-linked (Glycyl lysine isopeptide (Lys-Gly) (interchain with G-Cter in ubiquitin)). Over 35–44 the chain is Lumenal; that stretch reads VAKDPPNHTL. The chain crosses the membrane as a helical span at residues 45–69; that stretch reads KYLALHLASHELGLLLKNLCCLAEE. At 70–91 the chain is on the cytoplasmic side; it reads LCHVQSRYQGSYWKAVRACLGC. 2 S-palmitoyl cysteine lipidation sites follow: Cys88 and Cys91. The helical transmembrane segment at 92 to 106 threads the bilayer; sequence PIHCMAMILLSSYFY. Residues 107-115 lie on the Lumenal side of the membrane; sequence FLQNTADIY. A helical transmembrane segment spans residues 116-133; it reads LSWMFGLLVLYKSLSMLL. Over 134–378 the chain is Cytoplasmic; the sequence is GLQSLTPAEV…QPLPLRTDLI (245 aa). Lys150 is covalently cross-linked (Glycyl lysine isopeptide (Lys-Gly) (interchain with G-Cter in ubiquitin)). The segment at 152 to 339 is cyclic dinucleotide-binding domain (CBD); that stretch reads LNVAHGLAWS…RHIRQEEKEE (188 aa). 3',3'-c-di-GMP is bound at residue Gly165. Tyr166 lines the 2',3'-cUAMP pocket. Tyr166 provides a ligand contact to 3',3'-cGAMP. A Glycyl lysine isopeptide (Lys-Gly) (interchain with G-Cter in ubiquitin) cross-link involves residue Lys235. Residue Arg237 coordinates 2',3'-cUAMP. Arg237 provides a ligand contact to 3',3'-cGAMP. Residue Arg237 participates in 2',3'-cGAMP binding. 3',3'-c-di-GMP contacts are provided by residues 237–240 and Thr262; that span reads RVYS. Ser240 bears the Phosphoserine mark. Thr262 contacts 2',3'-cUAMP. Thr262 provides a ligand contact to 2',3'-cGAMP. A Glycyl lysine isopeptide (Lys-Gly) (interchain with G-Cter in SUMO) cross-link involves residue Lys337. Residues 339–378 form a C-terminal tail (CTT) region; sequence EVTMNAPMTSVAPPPSVLSQEPRLLISGMDQPLPLRTDLI. Ser354 carries the phosphoserine; by MAP3K7 modification. Residues Ser357 and Ser365 each carry the phosphoserine; by TBK1 modification. The short motif at 362 to 365 is the pLxIS motif element; sequence LLIS.

The protein belongs to the STING family. In terms of assembly, homodimer; forms a homodimer in absence of cyclic nucleotide (c-di-GMP or cGAMP); 'Lys-63'-linked ubiquitination at Lys-150 is required for homodimerization. Homotetramer; in presence of cyclic nucleotide (c-di-GMP or cGAMP), forms tetramers and higher-order oligomers through side-by-side packing. Interacts (when phosphorylated) with IRF3; following activation and phosphorylation on the pLxIS motif by TBK1, recruits IRF3. Interacts with RIGI, MAVS and SSR2. Interacts with RNF5 and TRIM56. Interacts with TBK1; when homodimer, leading to subsequent production of IFN-beta. Interacts with IFIT1 and IFIT2. Interacts with TRIM29; this interaction induces STING1 ubiquitination and subsequent degradation. Associates with the MHC-II complex. Interacts with STEEP1; interaction takes place upon cGAMP-activation and STING1 phosphorylation by MAP3K7/TAK1 and promotes STING1 translocation to COPII vesicles. Interacts with SEC24A, SEC24B and SEC24C; promoting translocation to COPII vesicles. Interacts (when ubiquitinated) with SQSTM1; leading to relocalization to autophagosomes. Interacts with SURF4. Interacts with HNRNPA2B1. Interacts with ZDHHC1; ZDHHC1 constitutively interacts with STING1 and in presence of DNA viruses activates it by promoting its cGAMP-induced oligomerization and the recruitment of downstream signaling components. Interacts with ZDHHC11; in presence of DNA viruses promotes the recruitment of IRF3 to STING1. Interacts with TOMM70. Interacts with IFI204. Interacts with TAB1; promoting recruitment of TAB1 to the endoplasmic reticulum membrane and subsequent activation of MAP3K7/TAK1. Interacts (via transmembrane domain) with TMEM203. Interacts with DDX41. Post-translationally, phosphorylation by TBK1 leads to activation and production of IFN-beta. Following cyclic nucleotide (c-di-GMP or cGAMP)-binding, activation and translocation from the endoplasmic reticulum, STING1 is phosphorylated by TBK1 at Ser-365 in the pLxIS motif. The phosphorylated pLxIS motif constitutes an IRF3-binding motif, leading to recruitment of the transcription factor IRF3 to induce type-I interferons and other cytokines. The phosphorylated pLxIS motif facilitates SENP2 recruitment during late phase of viral infection. Phosphorylated on tyrosine residues upon MHC-II aggregation. Dephosphorylation by PPP6C leads to inactivation and decreased production of IFN-beta. Phosphorylation at Ser-357 is also required to activate IRF3. Phosphorylation at Ser-354 by MAP3K7/TAK1 facilitates its interaction with STEEP1, promoting STING1 translocation to COPII vesicles. Ubiquitinated. Ubiquitinated via 'Lys-63'-linked ubiquitin chains in response to double-stranded DNA treatment, leading to relocalization to autophagosomes and subsequent degradation; this process is dependent on SQSTM1. 'Lys-63'-linked ubiquitination mediated by TRIM56 at Lys-150 promotes homodimerization and recruitment of the antiviral kinase TBK1 and subsequent production of IFN-beta. 'Lys-48'-linked polyubiquitination at Lys-150 occurring after viral infection is mediated by RNF5 and leads to proteasomal degradation. 'Lys-11'-linked polyubiquitination at Lys-150 by RNF26 leads to stabilize STING1: it protects STING1 from RNF5-mediated 'Lys-48'-linked polyubiquitination. 'Lys-33'-linked and 'Lys-48'-linked deubiquitinated by USP20; leading to its stabilization and promotion of innate antiviral response. 'Lys-48'-linked deubiquitinated by USP44; leading to its stabilization and promotion of innate antiviral response. Deubiquitinated by USP13; leading to inhibition of innate antiviral response. 'Lys-63'-linked deubiquitinated by USP49; leading to inhibition of the subsequent recruitment of TBK1 to the signaling complex. 'Lys-63'-linked ubiquitination mediated by RNF39 promotes the activation of the cGAS-STING pathway. MARCHF5-mediated ubiquitination prevents the oxidation-induced polymer formation. In terms of processing, sumoylated at Lys-337 by TRIM38 during the early phase of viral infection, promoting its stability by preventing its relocalization to autophagosomes and subsequent degradation. Desumoylated by SENP2 during the late phase of viral infection. Post-translationally, palmitoylation takes place in the Golgi apparatus and creates a platform for the recruitment of TBK1. As to expression, present in spleen and thymus tissue. Also present in dendritic cells (at protein level).

The protein localises to the endoplasmic reticulum membrane. Its subcellular location is the cytoplasm. It localises to the perinuclear region. It is found in the endoplasmic reticulum-Golgi intermediate compartment membrane. The protein resides in the golgi apparatus membrane. The protein localises to the cytoplasmic vesicle. Its subcellular location is the autophagosome membrane. It localises to the mitochondrion outer membrane. It is found in the cell membrane. The protein resides in the lysosome membrane. It carries out the reaction H(+)(in) = H(+)(out). Activated by anticancer drug 5,6-dimethylxanthenone 4-acetic acid (DMXAA). Specifically inhibited by nitrofuran derivatives C-178 and C-176, which covalently bind Cys-91 and prevent palmitoylation and subsequent activation od STING1. In terms of biological role, facilitator of innate immune signaling that acts as a sensor of cytosolic DNA from bacteria and viruses and promotes the production of type I interferon (IFN-alpha and IFN-beta). Innate immune response is triggered in response to non-CpG double-stranded DNA from viruses and bacteria delivered to the cytoplasm. Acts by binding cyclic dinucleotides: recognizes and binds cyclic di-GMP (c-di-GMP), a second messenger produced by bacteria, cyclic UMP-AMP (2',3'-cUAMP), and cyclic GMP-AMP (cGAMP), a messenger produced by CGAS in response to DNA virus in the cytosol. Upon binding to c-di-GMP, cUAMP or cGAMP, STING1 oligomerizes, translocates from the endoplasmic reticulum and is phosphorylated by TBK1 on the pLxIS motif, leading to recruitment and subsequent activation of the transcription factor IRF3 to induce expression of type I interferon and exert a potent anti-viral state. Exhibits 2',3' phosphodiester linkage-specific ligand recognition: can bind both 2'-3' linked cGAMP (2'-3'-cGAMP) and 3'-3' linked cGAMP but is preferentially activated by 2'-3' linked cGAMP. The preference for 2'-3'-cGAMP, compared to other linkage isomers is probably due to the ligand itself, whichs adopts an organized free-ligand conformation that resembles the STING1-bound conformation and pays low energy costs in changing into the active conformation. In addition to promote the production of type I interferons, plays a direct role in autophagy. Following cGAMP-binding, STING1 buds from the endoplasmic reticulum into COPII vesicles, which then form the endoplasmic reticulum-Golgi intermediate compartment (ERGIC). The ERGIC serves as the membrane source for WIPI2 recruitment and LC3 lipidation, leading to formation of autophagosomes that target cytosolic DNA or DNA viruses for degradation by the lysosome. Promotes autophagy by acting as a proton channel that directs proton efflux from the Golgi to facilitate MAP1LC3B/LC3B lipidation. The autophagy- and interferon-inducing activities can be uncoupled and autophagy induction is independent of TBK1 phosphorylation. Autophagy is also triggered upon infection by bacteria: following c-di-GMP-binding, which is produced by live Gram-positive bacteria, promotes reticulophagy. May be involved in translocon function, the translocon possibly being able to influence the induction of type I interferons. May be involved in transduction of apoptotic signals via its association with the major histocompatibility complex class II (MHC-II). The sequence is that of Stimulator of interferon genes protein from Mus musculus (Mouse).